Reading from the N-terminus, the 237-residue chain is Zinc finger AN1 domain-containing stress-associated protein 14 (237 aa).

A disordered region spans residues methionine 1 to proline 31. An AN1-type zinc finger spans residues glutamine 171–glycine 217. Residues cysteine 177, cysteine 180, cysteine 191, cysteine 193, cysteine 198, histidine 201, histidine 207, and cysteine 209 each contribute to the Zn(2+) site.

In terms of biological role, may be involved in environmental stress response. The chain is Zinc finger AN1 domain-containing stress-associated protein 14 (SAP14) from Oryza sativa subsp. japonica (Rice).